Consider the following 203-residue polypeptide: Large ribosomal subunit protein uL22 (203 aa).

A compositionally biased stretch (polar residues) spans Pro-138–Leu-167. The segment at Pro-138–Lys-203 is disordered. Over residues Ser-168 to Ala-177 the composition is skewed to low complexity. A compositionally biased stretch (polar residues) spans Ala-183–Leu-196.

This sequence belongs to the universal ribosomal protein uL22 family. Part of the 50S ribosomal subunit.

Its function is as follows. This protein binds specifically to 23S rRNA; its binding is stimulated by other ribosomal proteins, e.g. L4, L17, and L20. It is important during the early stages of 50S assembly. It makes multiple contacts with different domains of the 23S rRNA in the assembled 50S subunit and ribosome. In terms of biological role, the globular domain of the protein is located near the polypeptide exit tunnel on the outside of the subunit, while an extended beta-hairpin is found that lines the wall of the exit tunnel in the center of the 70S ribosome. The polypeptide is Large ribosomal subunit protein uL22 (Mesomycoplasma hyopneumoniae (strain 7448) (Mycoplasma hyopneumoniae)).